The following is a 471-amino-acid chain: Chromosomal replication initiator protein DnaA (471 aa).

The domain I, interacts with DnaA modulators stretch occupies residues 1–91; sequence MVDVSETTER…KYWQDESDAV (91 aa). Residues 91-133 form a domain II region; the sequence is VYSVDICVSDGVGVQPQMAEHPDGAVDGPPVVMVGGTYDHLSS. Residues 134 to 352 form a domain III, AAA+ region region; the sequence is PLDPRFTFDN…GALNKVVAHS (219 aa). ATP contacts are provided by G180, G182, K183, and T184. The domain IV, binds dsDNA stretch occupies residues 353 to 471; the sequence is SLVGRSVTIE…DINLLIRMLR (119 aa).

It belongs to the DnaA family. Oligomerizes as a right-handed, spiral filament on DNA at oriC.

Its subcellular location is the cytoplasm. Its function is as follows. Plays an essential role in the initiation and regulation of chromosomal replication. ATP-DnaA binds to the origin of replication (oriC) to initiate formation of the DNA replication initiation complex once per cell cycle. Binds the DnaA box (a 9 base pair repeat at the origin) and separates the double-stranded (ds)DNA. Forms a right-handed helical filament on oriC DNA; dsDNA binds to the exterior of the filament while single-stranded (ss)DNA is stabiized in the filament's interior. The ATP-DnaA-oriC complex binds and stabilizes one strand of the AT-rich DNA unwinding element (DUE), permitting loading of DNA polymerase. After initiation quickly degrades to an ADP-DnaA complex that is not apt for DNA replication. Binds acidic phospholipids. The chain is Chromosomal replication initiator protein DnaA from Anaplasma marginale (strain St. Maries).